The following is a 262-amino-acid chain: Dehydrin COR410 (262 aa).

2 disordered regions span residues 1 to 153 and 187 to 262; these read MEDE…HDTD and LPGG…KPSA. Basic and acidic residues-rich tracts occupy residues 34–45 and 53–74; these read KKAEEDKEKEEE and VSVE…KETL. Residues 89–101 are compositionally biased toward acidic residues; that stretch reads SDEEEEEVIDDNG. A run of 2 repeats spans residues 106-126 and 173-193. The tract at residues 106–245 is 3 X 21 AA repeats, Lys-rich; sequence RKKKKGLKEK…MDKLPGYHKT (140 aa). Composition is skewed to basic and acidic residues over residues 113–130 and 187–196; these read KEKL…EGEH and LPGGHKKPED. The span at 197–209 shows a compositional bias: low complexity; the sequence is AAAVPVTHAAPAP. Repeat 3 spans residues 225 to 245; sequence AKEKKGLLGKIMDKLPGYHKT. Residues 244 to 262 show a composition bias toward basic and acidic residues; the sequence is KTGEEDKAAAATGEHKPSA.

Expressed in roots, crown and leaves during cold acclimation.

The sequence is that of Dehydrin COR410 (COR410) from Triticum aestivum (Wheat).